We begin with the raw amino-acid sequence, 345 residues long: Protein-glutamate methylesterase/protein-glutamine glutaminase (345 aa).

Residues 5 to 123 (KVIVVDDSVL…ELSKMKDDLI (119 aa)) enclose the Response regulatory domain. D56 carries the post-translational modification 4-aspartylphosphate. The CheB-type methylesterase domain occupies 153–343 (SSDSIEAVVI…DEIIKIVRGL (191 aa)). Catalysis depends on residues S165, H192, and D285.

The protein belongs to the CheB family. Phosphorylated by CheA. Phosphorylation of the N-terminal regulatory domain activates the methylesterase activity.

It is found in the cytoplasm. The enzyme catalyses [protein]-L-glutamate 5-O-methyl ester + H2O = L-glutamyl-[protein] + methanol + H(+). It catalyses the reaction L-glutaminyl-[protein] + H2O = L-glutamyl-[protein] + NH4(+). Involved in chemotaxis. Part of a chemotaxis signal transduction system that modulates chemotaxis in response to various stimuli. Catalyzes the demethylation of specific methylglutamate residues introduced into the chemoreceptors (methyl-accepting chemotaxis proteins or MCP) by CheR. Also mediates the irreversible deamidation of specific glutamine residues to glutamic acid. The chain is Protein-glutamate methylesterase/protein-glutamine glutaminase from Clostridium acetobutylicum (strain ATCC 824 / DSM 792 / JCM 1419 / IAM 19013 / LMG 5710 / NBRC 13948 / NRRL B-527 / VKM B-1787 / 2291 / W).